Here is a 506-residue protein sequence, read N- to C-terminus: Nostrin (506 aa).

The F-BAR domain maps to 1 to 260; it reads MRDPLTDCPY…AISKIDIEKD (260 aa). Ser114 is subject to Phosphoserine. Residues 160–222 are a coiled coil; sequence SMTEKEKRKL…LELEKERIQL (63 aa). One can recognise an REM-1 domain in the interval 292-372; it reads AMDKERRKSL…SYKLSSMLAE (81 aa). Positions 438–497 constitute an SH3 domain; sequence LSSRLCKALYSFQARQDDELNLEKGDIVIIHEKKEGGWWFGSLNGKKGHFPAAYVEELPS. A Phosphoserine modification is found at Ser479.

As to quaternary structure, homotrimer. Interacts with DAB2. Interacts with NOS3, DNM2, WASL and CAV1. Interacts (via SH3 domain) with DNM2; this interaction allows the recruitment of NOS3 to dynamin-positive structures. In terms of tissue distribution, expressed at highest levels in heart, kidney, placenta and lung, and at lowest levels in brain, thymus and spleen. Present in vascular endothelial cells and placenta. Over-expressed in placenta from women with pre-eclampsia (at protein level).

The protein resides in the cell membrane. The protein localises to the cytoplasmic vesicle. It is found in the cytoplasm. Its subcellular location is the cytoskeleton. It localises to the nucleus. Functionally, multivalent adapter protein which may decrease NOS3 activity by inducing its translocation away from the plasma membrane. In Homo sapiens (Human), this protein is Nostrin.